A 180-amino-acid polypeptide reads, in one-letter code: UPF0134 protein MPN_368 (180 aa).

The protein belongs to the UPF0134 family.

This chain is UPF0134 protein MPN_368, found in Mycoplasma pneumoniae (strain ATCC 29342 / M129 / Subtype 1) (Mycoplasmoides pneumoniae).